The following is a 91-amino-acid chain: Defensin-like protein 220 (91 aa).

The signal sequence occupies residues 1 to 19; it reads MKTIFFFITFIVLVSSCTS. Disulfide bonds link Cys-61-Cys-78, Cys-64-Cys-83, and Cys-68-Cys-85.

This sequence belongs to the DEFL family.

The protein localises to the secreted. This is Defensin-like protein 220 from Arabidopsis thaliana (Mouse-ear cress).